Consider the following 393-residue polypeptide: Elongation factor Tu (393 aa).

The tr-type G domain maps to 10-203 (KPHVNIGTIG…AVDSYIPEPV (194 aa)). The interval 19–26 (GHVDHGKT) is G1. 19-26 (GHVDHGKT) contacts GTP. A Mg(2+)-binding site is contributed by threonine 26. Residues 60-64 (GITIS) form a G2 region. Positions 81–84 (DCPG) are G3. GTP contacts are provided by residues 81–85 (DCPGH) and 136–139 (NKVD). Residues 136–139 (NKVD) form a G4 region. The tract at residues 173–175 (SAL) is G5.

The protein belongs to the TRAFAC class translation factor GTPase superfamily. Classic translation factor GTPase family. EF-Tu/EF-1A subfamily. As to quaternary structure, monomer.

Its subcellular location is the cytoplasm. It carries out the reaction GTP + H2O = GDP + phosphate + H(+). GTP hydrolase that promotes the GTP-dependent binding of aminoacyl-tRNA to the A-site of ribosomes during protein biosynthesis. The protein is Elongation factor Tu of Prosthecochloris aestuarii (strain DSM 271 / SK 413).